A 157-amino-acid polypeptide reads, in one-letter code: Endoribonuclease YbeY (157 aa).

Positions 114, 118, and 124 each coordinate Zn(2+).

It belongs to the endoribonuclease YbeY family. Zn(2+) serves as cofactor.

The protein resides in the cytoplasm. In terms of biological role, single strand-specific metallo-endoribonuclease involved in late-stage 70S ribosome quality control and in maturation of the 3' terminus of the 16S rRNA. The chain is Endoribonuclease YbeY from Salmonella paratyphi A (strain AKU_12601).